Here is a 295-residue protein sequence, read N- to C-terminus: Probable phosphoglycerate mutase PMU1 (295 aa).

The active-site Tele-phosphohistidine intermediate is the histidine 61. Residue glutamate 170 is the Proton donor/acceptor of the active site.

The protein belongs to the phosphoglycerate mutase family.

It localises to the cytoplasm. The protein resides in the nucleus. Functionally, probable phosphomutase that may have a function related to the manipulation of phosphate groups on carbohydrates. Reduces trehalose-6-phosphate levels when overexpressed in TPS2-deleted cells. Reduces 5'-Phosphoribosyl-4-carboxamide-5-aminoimidazole (AICAR) levels, a metabolic intermediate at the crossroads between AMP and histidine biosynthesis pathways, when overexpressed in a ADE3-ADE16-ADE17 triple deletant. The polypeptide is Probable phosphoglycerate mutase PMU1 (Saccharomyces cerevisiae (strain ATCC 204508 / S288c) (Baker's yeast)).